Here is a 154-residue protein sequence, read N- to C-terminus: Myoglobin (154 aa).

Residues Gly2 to Lys148 form the Globin domain. The residue at position 4 (Ser4) is a Phosphoserine. A nitrite-binding site is contributed by His65. Residue His65 coordinates O2. The residue at position 68 (Thr68) is a Phosphothreonine. His94 lines the heme b pocket.

It belongs to the globin family. In terms of assembly, monomeric.

Its subcellular location is the cytoplasm. It localises to the sarcoplasm. The catalysed reaction is Fe(III)-heme b-[protein] + nitric oxide + H2O = Fe(II)-heme b-[protein] + nitrite + 2 H(+). The enzyme catalyses H2O2 + AH2 = A + 2 H2O. Its function is as follows. Monomeric heme protein which primary function is to store oxygen and facilitate its diffusion within muscle tissues. Reversibly binds oxygen through a pentacoordinated heme iron and enables its timely and efficient release as needed during periods of heightened demand. Depending on the oxidative conditions of tissues and cells, and in addition to its ability to bind oxygen, it also has a nitrite reductase activity whereby it regulates the production of bioactive nitric oxide. Under stress conditions, like hypoxia and anoxia, it also protects cells against reactive oxygen species thanks to its pseudoperoxidase activity. In Perodicticus potto edwarsi (Potto), this protein is Myoglobin (MB).